A 287-amino-acid polypeptide reads, in one-letter code: MSGVFLEAAAGAAGRPAGLPGRGGQPGLAGAEGGEGRAGPGAHGDGVRQGGGLQTGGAGAAARHRGAVAPTKLRCGGPEGCYYARVESLICALHGVSSLYVCRACENYHVCDGGDECIVVNTGDNMVCFLTGNCVADNIQDFCDLNIAVKKKEMECAPTDDYNTFLGIAEAIKKDIFTFFNREDGKLAEIREAILTEGGLRPEIGRLIEVTLRVSIHIFSKSDHGYDVICSMYVQIIISIYSTKTVYNGLLFKCTKNKRYDSVLKKMRELWMSTSATGGCAGAAAAD.

Residues A13–A58 are disordered. Over residues P20–A58 the composition is skewed to gly residues.

Belongs to the herpesviridae UL92 family.

The sequence is that of Gene 31 protein (31) from Equine herpesvirus 2 (strain 86/87) (EHV-2).